Here is a 5635-residue protein sequence, read N- to C-terminus: Hemicentin-1 (5635 aa).

An N-terminal signal peptide occupies residues Met-1 to Ala-21. One can recognise a VWFA domain in the interval Thr-41–Val-216. Residues Asn-349 and Asn-390 are each glycosylated (N-linked (GlcNAc...) asparagine). Ig-like C2-type domains lie at Pro-431 to Ser-517, Pro-520 to Thr-607, Pro-612 to Arg-697, Pro-702 to Asp-788, Pro-793 to Thr-883, Pro-890 to Val-976, Pro-981 to Thr-1067, Pro-1072 to Asn-1166, Pro-1171 to Thr-1255, Pro-1262 to Lys-1354, Pro-1358 to Asp-1447, Pro-1452 to Thr-1541, Pro-1546 to Asp-1634, Pro-1638 to Lys-1724, Pro-1733 to Thr-1821, Pro-1826 to His-1914, Pro-1919 to Gln-2007, Pro-2012 to Asp-2097, Pro-2104 to Asn-2190, Pro-2195 to Gln-2285, Pro-2290 to Ser-2379, Pro-2384 to Phe-2470, Pro-2478 to Ser-2564, Pro-2571 to Lys-2662, Pro-2666 to Gln-2763, Pro-2766 to Arg-2864, Pro-2868 to Asn-2959, Pro-2964 to Thr-3051, Pro-3056 to Asn-3146, Pro-3151 to Ser-3240, Pro-3245 to Asn-3335, Pro-3340 to Gln-3429, Pro-3434 to Ser-3516, Pro-3527 to Arg-3615, Pro-3620 to Thr-3708, Pro-3713 to Asp-3797, Pro-3804 to Thr-3892, Pro-3897 to His-3983, Pro-3988 to Gln-4076, Pro-4079 to Thr-4164, Pro-4169 to Thr-4255, Pro-4260 to Tyr-4344, Pro-4348 to Thr-4435, and Pro-4440 to Gln-4527. Cys-451 and Cys-499 are joined by a disulfide. N-linked (GlcNAc...) asparagine glycosylation is found at Asn-528, Asn-550, Asn-573, and Asn-620. Cys-541 and Cys-591 are oxidised to a cystine. The cysteines at positions 633 and 681 are disulfide-linked. N-linked (GlcNAc...) asparagine glycosylation occurs at Asn-693. Cysteines 723 and 772 form a disulfide. Residue Asn-809 is glycosylated (N-linked (GlcNAc...) asparagine). Cystine bridges form between Cys-814-Cys-867 and Cys-911-Cys-960. Residue Asn-970 is glycosylated (N-linked (GlcNAc...) asparagine). Cystine bridges form between Cys-1002–Cys-1051 and Cys-1101–Cys-1150. Asn-1158 carries an N-linked (GlcNAc...) asparagine glycan. A disulfide bridge connects residues Cys-1192 and Cys-1241. Asn-1272 carries N-linked (GlcNAc...) asparagine glycosylation. A disulfide bridge links Cys-1288 with Cys-1338. N-linked (GlcNAc...) asparagine glycosylation occurs at Asn-1369. Cystine bridges form between Cys-1382/Cys-1431 and Cys-1475/Cys-1525. N-linked (GlcNAc...) asparagine glycosylation is present at Asn-1552. Cystine bridges form between Cys-1569-Cys-1618, Cys-1663-Cys-1712, Cys-1756-Cys-1805, and Cys-1848-Cys-1898. Residue Asn-1929 is glycosylated (N-linked (GlcNAc...) asparagine). 2 cysteine pairs are disulfide-bonded: Cys-1942–Cys-1991 and Cys-2033–Cys-2083. Residues Asn-2112 and Asn-2155 are each glycosylated (N-linked (GlcNAc...) asparagine). 3 disulfides stabilise this stretch: Cys-2125–Cys-2174, Cys-2218–Cys-2269, and Cys-2314–Cys-2363. An N-linked (GlcNAc...) asparagine glycan is attached at Asn-2395. 3 disulfide bridges follow: Cys-2408/Cys-2457, Cys-2501/Cys-2550, and Cys-2597/Cys-2646. An N-linked (GlcNAc...) asparagine glycan is attached at Asn-2689. 2 disulfide bridges follow: Cys-2696–Cys-2745 and Cys-2799–Cys-2848. Residue Asn-2887 is glycosylated (N-linked (GlcNAc...) asparagine). Cys-2894 and Cys-2943 are disulfide-bonded. A glycan (N-linked (GlcNAc...) asparagine) is linked at Asn-2973. 6 cysteine pairs are disulfide-bonded: Cys-2986–Cys-3035, Cys-3081–Cys-3130, Cys-3173–Cys-3224, Cys-3268–Cys-3319, Cys-3364–Cys-3413, and Cys-3457–Cys-3506. N-linked (GlcNAc...) asparagine glycans are attached at residues Asn-3221 and Asn-3300. Asn-3530 carries N-linked (GlcNAc...) asparagine glycosylation. 2 cysteine pairs are disulfide-bonded: Cys-3550/Cys-3599 and Cys-3643/Cys-3692. 2 N-linked (GlcNAc...) asparagine glycosylation sites follow: Asn-3689 and Asn-3727. Cys-3734 and Cys-3783 are oxidised to a cystine. Asn-3812 is a glycosylation site (N-linked (GlcNAc...) asparagine). Intrachain disulfides connect Cys-3825-Cys-3876, Cys-3918-Cys-3967, Cys-4009-Cys-4058, Cys-4100-Cys-4148, Cys-4190-Cys-4239, Cys-4281-Cys-4328, Cys-4371-Cys-4419, Cys-4461-Cys-4509, Cys-4541-Cys-4578, Cys-4545-Cys-4583, Cys-4556-Cys-4568, Cys-4598-Cys-4635, Cys-4602-Cys-4640, Cys-4613-Cys-4625, Cys-4655-Cys-4692, Cys-4659-Cys-4697, Cys-4670-Cys-4682, Cys-4712-Cys-4749, Cys-4716-Cys-4754, Cys-4727-Cys-4739, Cys-4769-Cys-4806, Cys-4773-Cys-4811, Cys-4784-Cys-4796, Cys-4826-Cys-4863, Cys-4830-Cys-4868, and Cys-4841-Cys-4853. Residue Asn-4029 is glycosylated (N-linked (GlcNAc...) asparagine). N-linked (GlcNAc...) asparagine glycans are attached at residues Asn-4401 and Asn-4491. TSP type-1 domains are found at residues His-4529–Pro-4584, Asp-4586–Pro-4641, His-4643–Pro-4698, His-4700–Pro-4755, His-4757–Pro-4812, and Asp-4814–Pro-4869. N-linked (GlcNAc...) asparagine glycosylation occurs at Asn-4606. The 223-residue stretch at Gly-4871–Pro-5093 folds into the Nidogen G2 beta-barrel domain. Asn-4894 and Asn-5040 each carry an N-linked (GlcNAc...) asparagine glycan. Residues Asp-5107–Gln-5146 form the EGF-like 1; calcium-binding domain. 3 disulfide bridges follow: Cys-5111–Cys-5121, Cys-5117–Cys-5130, and Cys-5132–Cys-5145. Residues Asp-5147–Gln-5191 enclose the EGF-like 2; calcium-binding domain. Residues Asp-5192–Met-5229 enclose the EGF-like 3; calcium-binding domain. Disulfide bonds link Cys-5196–Cys-5206, Cys-5202–Cys-5215, and Cys-5217–Cys-5228. In terms of domain architecture, EGF-like 4; calcium-binding spans Asp-5230 to Ile-5271. Residue Asn-5267 is glycosylated (N-linked (GlcNAc...) asparagine). An EGF-like 5; calcium-binding domain is found at Asp-5272–Gln-5307. 8 disulfides stabilise this stretch: Cys-5276–Cys-5289, Cys-5283–Cys-5298, Cys-5319–Cys-5330, Cys-5326–Cys-5339, Cys-5341–Cys-5354, Cys-5436–Cys-5446, Cys-5442–Cys-5455, and Cys-5457–Cys-5470. Residues Asp-5315–Ala-5355 enclose the EGF-like 6; calcium-binding domain. Residues Asp-5432 to Gln-5471 form the EGF-like 7; calcium-binding domain. The N-linked (GlcNAc...) asparagine glycan is linked to Asn-5615.

Expressed in hair follicles and in the dermis (at protein level). As to expression, expressed in skin fibroblasts and retinal pigment epithelium (RPE) cells.

The protein localises to the secreted. The protein resides in the extracellular space. Its subcellular location is the extracellular matrix. It is found in the basement membrane. It localises to the cytoplasm. The protein localises to the cell junction. The protein resides in the cleavage furrow. In terms of biological role, involved in transforming growth factor beta-mediated rearrangement of the podocyte cytoskeleton which includes reduction of F-actin fibers and broadening, flattening and elongation of podocytes. Plays a role in basement membrane organization. May promote cleavage furrow maturation during cytokinesis in preimplantation embryos. May play a role in the architecture of adhesive and flexible epithelial cell junctions. May play a role during myocardial remodeling by imparting an effect on cardiac fibroblast migration. In Homo sapiens (Human), this protein is Hemicentin-1 (HMCN1).